Consider the following 383-residue polypeptide: Guanine nucleotide-binding protein G(s) subunit alpha (383 aa).

Positions 1–31 (MGCFGSAGSKQSDSNSSEDTKSQKRRSDAIT) are disordered. The N-palmitoyl glycine moiety is linked to residue G2. C3 carries S-palmitoyl cysteine lipidation. Residues 8–17 (GSKQSDSNSS) show a composition bias toward polar residues. The segment covering 18 to 31 (EDTKSQKRRSDAIT) has biased composition (basic and acidic residues). In terms of domain architecture, G-alpha spans 43-383 (ATHRLLLLGA…RMHLRQYELL (341 aa)). The segment at 46-59 (RLLLLGAGESGKST) is G1 motif. GTP is bound by residues 51–58 (GAGESGKS), 187–193 (LRCRVLT), 212–216 (DVGGQ), 281–284 (NKQD), and A355. The Mg(2+) site is built by S58 and T193. The segment at 185-193 (DILRCRVLT) is G2 motif. Residues 208 to 217 (FHMFDVGGQR) form a G3 motif region. Positions 277-284 (ILFLNKQD) are G4 motif. A G5 motif region spans residues 353–358 (TCAVDT).

This sequence belongs to the G-alpha family. G(s) subfamily. As to quaternary structure, g proteins are composed of 3 units; alpha, beta and gamma. The alpha chain contains the guanine nucleotide binding site.

Functionally, guanine nucleotide-binding proteins (G proteins) are involved as modulators or transducers in various transmembrane signaling systems. The G(s) protein is involved in hormonal regulation of adenylate cyclase: it activates the cyclase. Participates in olfactory signal transduction. In Anopheles gambiae (African malaria mosquito), this protein is Guanine nucleotide-binding protein G(s) subunit alpha.